Reading from the N-terminus, the 112-residue chain is UPF0212 protein Mpal_1084 (112 aa).

The protein belongs to the UPF0212 family.

This is UPF0212 protein Mpal_1084 from Methanosphaerula palustris (strain ATCC BAA-1556 / DSM 19958 / E1-9c).